The sequence spans 148 residues: FAD synthase (148 aa).

Residues 14-15 (VF), 19-22 (HVGH), and aspartate 100 contribute to the ATP site.

It belongs to the archaeal FAD synthase family. In terms of assembly, homodimer. It depends on a divalent metal cation as a cofactor.

It carries out the reaction FMN + ATP + H(+) = FAD + diphosphate. It participates in cofactor biosynthesis; FAD biosynthesis; FAD from FMN: step 1/1. In terms of biological role, catalyzes the transfer of the AMP portion of ATP to flavin mononucleotide (FMN) to produce flavin adenine dinucleotide (FAD) coenzyme. In Pyrococcus abyssi (strain GE5 / Orsay), this protein is FAD synthase.